Consider the following 342-residue polypeptide: Protein pelota homolog (342 aa).

Belongs to the eukaryotic release factor 1 family. Pelota subfamily. As to quaternary structure, monomer. A divalent metal cation is required as a cofactor.

Its subcellular location is the cytoplasm. In terms of biological role, may function in recognizing stalled ribosomes, interact with stem-loop structures in stalled mRNA molecules, and effect endonucleolytic cleavage of the mRNA. May play a role in the release non-functional ribosomes and degradation of damaged mRNAs. Has endoribonuclease activity. In Sulfolobus acidocaldarius (strain ATCC 33909 / DSM 639 / JCM 8929 / NBRC 15157 / NCIMB 11770), this protein is Protein pelota homolog.